The sequence spans 262 residues: Inactive snake venom serine proteinase 13 (262 aa).

Positions 1 to 18 (MGLIRVLANLLILQLSYA) are cleaved as a signal peptide. Residues 19 to 24 (QKSSEL) constitute a propeptide that is removed on maturation. A Peptidase S1 domain is found at 25–250 (VIGGDECNIN…HLDWIQSIIA (226 aa)). Intrachain disulfides connect Cys-31/Cys-162, Cys-49/Cys-65, Cys-97/Cys-257, Cys-141/Cys-211, Cys-173/Cys-190, and Cys-201/Cys-226. 3 N-linked (GlcNAc...) asparagine glycosylation sites follow: Asn-78, Asn-102, and Asn-153.

This sequence belongs to the peptidase S1 family. Snake venom subfamily. As to quaternary structure, monomer. In terms of tissue distribution, expressed by the venom gland.

It is found in the secreted. This Crotalus adamanteus (Eastern diamondback rattlesnake) protein is Inactive snake venom serine proteinase 13.